A 129-amino-acid polypeptide reads, in one-letter code: Large ribosomal subunit protein bL21 (129 aa).

The disordered stretch occupies residues 100–129 (DGAKPSKKAAEKKAPKAAPKKAAAKAESAE).

The protein belongs to the bacterial ribosomal protein bL21 family. Part of the 50S ribosomal subunit. Contacts protein L20.

In terms of biological role, this protein binds to 23S rRNA in the presence of protein L20. This Brucella anthropi (strain ATCC 49188 / DSM 6882 / CCUG 24695 / JCM 21032 / LMG 3331 / NBRC 15819 / NCTC 12168 / Alc 37) (Ochrobactrum anthropi) protein is Large ribosomal subunit protein bL21.